The following is a 2555-amino-acid chain: Plipastatin synthase subunit C (2555 aa).

Residues 7-306 (IQDIYPLSFM…NTIPIRAQSD (300 aa)) form a condensation 1 region. An adenylation 1 region spans residues 491 to 894 (TYAELDMYAS…SIEGVREAAV (404 aa)). In terms of domain architecture, Carrier 1 spans 967 to 1042 (APRNVTEMKL…GLATVIREGT (76 aa)). S1002 carries the O-(pantetheine 4'-phosphoryl)serine modification. The segment at 1054–1344 (KQETYPVSSA…NTLALRTRPE (291 aa)) is condensation 2. Residues 1532-1927 (TYEDLNSWAN…QIDGVKEAAV (396 aa)) form an adenylation 2 region. The Carrier 2 domain occupies 2003 to 2077 (PPRNELEEQL…DLSPFIRKSE (75 aa)). O-(pantetheine 4'-phosphoryl)serine is present on S2038. The interval 2085-2548 (IQGDVPWTPV…SLTAEDLDSI (464 aa)) is epimerization 3.

The protein belongs to the ATP-dependent AMP-binding enzyme family. The cofactor is pantetheine 4'-phosphate.

Functionally, this protein is a multifunctional enzyme, able to activate and polymerize the amino acids Glu and Ala/Val as part of the biosynthesis of the lipopeptide antibiotic plipastatin. The Ala/Val residue is further epimerized to the D-isomer form. The activation sites for these amino acids consist of individual domains. In Bacillus subtilis (strain 168), this protein is Plipastatin synthase subunit C (ppsC).